A 296-amino-acid polypeptide reads, in one-letter code: Telomere repeat-binding factor 4 (296 aa).

The region spanning 1–62 (MGNQKLKWTA…WRNLSVAPGI (62 aa)) is the HTH myb-type domain. Residues 28–58 (WKNILRDPELAEQLSSRSNIDLKDKWRNLSV) constitute a DNA-binding region (H-T-H motif). Positions 126–200 (NAPRYDGMIF…STQNFYKMND (75 aa)) constitute an H15 domain. A disordered region spans residues 197–232 (KMNDNSLVQRTPHVARPKESNTKSRQQTNSQGPSIS). Polar residues predominate over residues 219 to 232 (KSRQQTNSQGPSIS). Positions 245 to 282 (KLVEVENKLDVSKGAAEEIERLMKLAEEADEMLVIARE) form a coiled coil.

Belongs to the histone H1/H5 family. SMH subfamily.

The protein resides in the nucleus. It is found in the chromosome. In terms of biological role, binds preferentially double-stranded telomeric repeats. This Arabidopsis thaliana (Mouse-ear cress) protein is Telomere repeat-binding factor 4.